The chain runs to 79 residues: Acyl carrier protein (79 aa).

The Carrier domain occupies 4 to 79 (AEIKDKVYDI…QAIDYIVNKK (76 aa)). Ser39 bears the O-(pantetheine 4'-phosphoryl)serine mark.

The protein belongs to the acyl carrier protein (ACP) family. 4'-phosphopantetheine is transferred from CoA to a specific serine of apo-ACP by AcpS. This modification is essential for activity because fatty acids are bound in thioester linkage to the sulfhydryl of the prosthetic group.

It localises to the cytoplasm. It participates in lipid metabolism; fatty acid biosynthesis. Its function is as follows. Carrier of the growing fatty acid chain in fatty acid biosynthesis. The polypeptide is Acyl carrier protein (Pelodictyon phaeoclathratiforme (strain DSM 5477 / BU-1)).